We begin with the raw amino-acid sequence, 354 residues long: Guanine nucleotide-binding protein alpha-2 subunit (354 aa).

The G-alpha domain maps to 33–354; the sequence is KIYKVLLLGA…QHSLKEAGMF (322 aa). The segment at 36 to 49 is G1 motif; it reads KVLLLGASDSGKST. D44, S45, G46, K47, S48, T49, D148, L173, T179, G201, N269, K270, D272, and A326 together coordinate GTP. S48 is a binding site for Mg(2+). Residues 171 to 179 are G2 motif; it reads DILRSRNST. A Mg(2+)-binding site is contributed by T179. Positions 194–203 are G3 motif; it reads IRMFDVGGQR. The tract at residues 265–272 is G4 motif; the sequence is ILFLNKFD. Residues 324–329 are G5 motif; that stretch reads TTAVDT.

It belongs to the G-alpha family. In terms of assembly, g proteins are composed of 3 units; alpha, beta and gamma. Binding of the beta-gamma subunit complex (git5-git11) to the alpha subunit (gpa2) facilitates interaction with GPCR git3. Interacts with GPCR git3; the interaction is direct and leads to activation of gpa2 upon glucose stimulation. Interacts with adenylate cyclase cyr1 (via N-terminus); the interaction is direct and serves to activate adenylate cyclase and cAMP-PKA signaling, to repress sexual development and gluconeogenesis. Mg(2+) serves as cofactor.

The protein localises to the cell membrane. Functionally, alpha subunit of the heterotrimeric guanine nucleotide-binding protein (G protein) involved in glucose-induced cAMP signaling. Binds to its cognate transmembrane receptor git3, which senses extracellular glucose, and activates cAMP-PKA signaling to repress sexual development and gluconeogenesis. In Schizosaccharomyces pombe (strain 972 / ATCC 24843) (Fission yeast), this protein is Guanine nucleotide-binding protein alpha-2 subunit.